Consider the following 89-residue polypeptide: HssA/B-like protein 15 (89 aa).

The protein belongs to the hssA/B family.

This Dictyostelium discoideum (Social amoeba) protein is HssA/B-like protein 15 (hssl15).